Here is a 269-residue protein sequence, read N- to C-terminus: Energy-coupling factor transporter ATP-binding protein EcfA1 (269 aa).

Residues 8–242 (IVFKNVSFQY…AEGLTTIGLD (235 aa)) enclose the ABC transporter domain. 42–49 (GHNGSGKS) lines the ATP pocket.

It belongs to the ABC transporter superfamily. Energy-coupling factor EcfA family. In terms of assembly, forms a stable energy-coupling factor (ECF) transporter complex composed of 2 membrane-embedded substrate-binding proteins (S component), 2 ATP-binding proteins (A component) and 2 transmembrane proteins (T component).

It is found in the cell membrane. ATP-binding (A) component of a common energy-coupling factor (ECF) ABC-transporter complex. Unlike classic ABC transporters this ECF transporter provides the energy necessary to transport a number of different substrates. This chain is Energy-coupling factor transporter ATP-binding protein EcfA1, found in Staphylococcus aureus (strain bovine RF122 / ET3-1).